The chain runs to 968 residues: RNA polymerase-associated protein RapA (968 aa).

Residues 164-334 enclose the Helicase ATP-binding domain; sequence DVGRRHAPRV…FARLRLLDPN (171 aa). 177–184 serves as a coordination point for ATP; that stretch reads DEVGLGKT. Residues 280-283 carry the DEAH box motif; the sequence is DEAH. One can recognise a Helicase C-terminal domain in the interval 490–685; sequence RVEWLMGYLT…ALKAQLEQGR (196 aa).

This sequence belongs to the SNF2/RAD54 helicase family. RapA subfamily. In terms of assembly, interacts with the RNAP. Has a higher affinity for the core RNAP than for the holoenzyme. Its ATPase activity is stimulated by binding to RNAP.

In terms of biological role, transcription regulator that activates transcription by stimulating RNA polymerase (RNAP) recycling in case of stress conditions such as supercoiled DNA or high salt concentrations. Probably acts by releasing the RNAP, when it is trapped or immobilized on tightly supercoiled DNA. Does not activate transcription on linear DNA. Probably not involved in DNA repair. This is RNA polymerase-associated protein RapA from Salmonella newport (strain SL254).